Here is a 1001-residue protein sequence, read N- to C-terminus: Sarcoplasmic/endoplasmic reticulum calcium ATPase 1 (1001 aa).

At 1–48 the chain is on the cytoplasmic side; it reads MEAAHSKSTEECLAYFGVSETTGLTPDQVKRHLEKYGHNELPAEEGKS. The chain crosses the membrane as a helical span at residues 49-69; the sequence is LWELVIEQFEDLLVRILLLAA. The Lumenal portion of the chain corresponds to 70 to 89; it reads CISFVLAWFEEGEETITAFV. A helical transmembrane segment spans residues 90-110; sequence EPFVILLILIANAIVGVWQER. The Cytoplasmic segment spans residues 111–253; it reads NAENAIEALK…QDKTPLQQKL (143 aa). Residues 254–273 traverse the membrane as a helical segment; that stretch reads DEFGEQLSKVISLICVAVWL. Residues 274-295 lie on the Lumenal side of the membrane; that stretch reads INIGHFNDPVHGGSWIRGAIYY. A helical membrane pass occupies residues 296 to 313; the sequence is FKIAVALAVAAIPEGLPA. Residues Val304, Ala305, Ile307, and Glu309 each coordinate Ca(2+). Topologically, residues 314–757 are cytoplasmic; that stretch reads VITTCLALGT…EEGRAIYNNM (444 aa). The active-site 4-aspartylphosphate intermediate is the Asp351. Positions 351 and 353 each coordinate Mg(2+). Position 353 (Thr353) interacts with ATP. The residue at position 441 (Thr441) is a Phosphothreonine. The ATP site is built by Glu442, Arg489, Lys515, and Arg560. Thr569 is subject to Phosphothreonine. The residue at position 581 (Ser581) is a Phosphoserine. ATP is bound by residues Thr625, Gly626, Asp627, Arg678, and Lys684. Residue Asp703 coordinates Mg(2+). Position 706 (Asn706) interacts with ATP. Residues 758–777 traverse the membrane as a helical segment; sequence KQFIRYLISSNVGEVVCIFL. Ca(2+) contacts are provided by Asn768 and Glu771. Residues 778–787 are Lumenal-facing; it reads TAALGLPEAL. Residues 788 to 808 traverse the membrane as a helical segment; sequence IPVQLLWVNLVTDGLPATALG. The tract at residues 788–808 is interaction with PLN; the sequence is IPVQLLWVNLVTDGLPATALG. Residues Asn796, Thr799, and Asp800 each contribute to the Ca(2+) site. The Cytoplasmic portion of the chain corresponds to 809-828; the sequence is FNPPDLDIMDRPPRSPKEPL. A helical transmembrane segment spans residues 829 to 851; sequence ISGWLFFRYMAIGGYVGAATVGA. Residues 852–897 lie on the Lumenal side of the membrane; it reads AAWWFMYAEDGPGVTYHQLTHFMQCTEDHPHFEGLDCEIFEAPEPM. A disulfide bridge links Cys876 with Cys888. Residues 898 to 917 traverse the membrane as a helical segment; the sequence is TMALSVLVTIEMCNALNSLS. Glu908 provides a ligand contact to Ca(2+). Residues 918-930 are Cytoplasmic-facing; it reads ENQSLMRMPPWVN. Residues 931–949 traverse the membrane as a helical segment; it reads IWLLGSICLSMSLHFLILY. The interaction with PLN stretch occupies residues 932 to 943; sequence WLLGSICLSMSL. The Lumenal portion of the chain corresponds to 950–964; the sequence is VDPLPMIFKLKALDL. The chain crosses the membrane as a helical span at residues 965 to 985; that stretch reads TQWLMVLKISLPVIGLDEILK. Over 986–1001 the chain is Cytoplasmic; that stretch reads FIARNYLEDPEDERRK.

It belongs to the cation transport ATPase (P-type) (TC 3.A.3) family. Type IIA subfamily. As to quaternary structure, interacts with sarcolipin (SLN). Interacts with phospholamban (PLN). Interacts with myoregulin (MRLN). Interacts with DWORF. Interacts with VMP1. Mg(2+) serves as cofactor. As to expression, skeletal muscle (at protein level). Skeletal muscle, fast twitch muscle (type II) fibers.

It localises to the endoplasmic reticulum membrane. The protein localises to the sarcoplasmic reticulum membrane. It carries out the reaction Ca(2+)(in) + ATP + H2O = Ca(2+)(out) + ADP + phosphate + H(+). With respect to regulation, inhibited by sarcolipin (SLN) and myoregulin (MRLN). Has also been shown to be reversibly inhibited by phospholamban (PLN) at low calcium concentrations in vitro. Dephosphorylated PLN decreases the apparent affinity of the ATPase for calcium and this inhibition is regulated by the phosphorylation of PLN in vitro. Enhanced by DWORF; DWORF increases activity by displacing sarcolipin (SLN), phospholamban (PLN) and myoregulin (MRLN). Functionally, key regulator of striated muscle performance by acting as the major Ca(2+) ATPase responsible for the reuptake of cytosolic Ca(2+) into the sarcoplasmic reticulum. Catalyzes the hydrolysis of ATP coupled with the translocation of calcium from the cytosol to the sarcoplasmic reticulum lumen. Contributes to calcium sequestration involved in muscular excitation/contraction. This chain is Sarcoplasmic/endoplasmic reticulum calcium ATPase 1 (ATP2A1), found in Oryctolagus cuniculus (Rabbit).